Consider the following 256-residue polypeptide: Pimeloyl-[acyl-carrier protein] methyl ester esterase (256 aa).

Positions His15–Pro242 constitute an AB hydrolase-1 domain. Substrate is bound by residues Trp22, Ser82–Leu83, and Phe143–Gln147. Ser82 functions as the Nucleophile in the catalytic mechanism. Active-site residues include Asp207 and His235. His235 provides a ligand contact to substrate.

This sequence belongs to the AB hydrolase superfamily. Carboxylesterase BioH family. In terms of assembly, monomer.

It localises to the cytoplasm. The enzyme catalyses 6-carboxyhexanoyl-[ACP] methyl ester + H2O = 6-carboxyhexanoyl-[ACP] + methanol + H(+). Its pathway is cofactor biosynthesis; biotin biosynthesis. Its function is as follows. The physiological role of BioH is to remove the methyl group introduced by BioC when the pimeloyl moiety is complete. It allows to synthesize pimeloyl-ACP via the fatty acid synthetic pathway through the hydrolysis of the ester bonds of pimeloyl-ACP esters. The polypeptide is Pimeloyl-[acyl-carrier protein] methyl ester esterase (Escherichia coli O6:H1 (strain CFT073 / ATCC 700928 / UPEC)).